A 452-amino-acid chain; its full sequence is Gamma-aminobutyric acid receptor subunit delta (452 aa).

Positions 1-24 (MDAPARLLAPLLLLCAQQLRGTRA) are cleaved as a signal peptide. The Extracellular portion of the chain corresponds to 25 to 251 (MNDIGDYVGS…HLRRNRGVYI (227 aa)). N-linked (GlcNAc...) asparagine glycosylation is found at asparagine 103 and asparagine 106. Cysteines 164 and 178 form a disulfide. Residues 252-271 (IQSYMPSVLLVAMSWVSFWI) form a helical membrane-spanning segment. The Cytoplasmic portion of the chain corresponds to 272–275 (SQAA). A helical transmembrane segment spans residues 276-298 (VPARVSLGITTVLTMTTLMVSAR). Residues 299-308 (SSLPRASAIK) are Extracellular-facing. Residues 309 to 331 (ALDVYFWICYVFVFAALVEYAFA) traverse the membrane as a helical segment. Residues 332–426 (HFNADYRKKQ…ARLRPIDADT (95 aa)) are Cytoplasmic-facing. Position 390 is a phosphoserine (serine 390). Residues 427 to 449 (IDIYARAVFPAAFAAVNVIYWAA) traverse the membrane as a helical segment. Topologically, residues 450-452 (YAM) are extracellular.

This sequence belongs to the ligand-gated ion channel (TC 1.A.9) family. Gamma-aminobutyric acid receptor (TC 1.A.9.5) subfamily. GABRD sub-subfamily. In terms of assembly, heteropentamer, formed by a combination of alpha (GABRA1-6), beta (GABRB1-3), gamma (GABRG1-3), delta (GABRD), epsilon (GABRE), rho (GABRR1-3), pi (GABRP) and theta (GABRQ) chains, each subunit exhibiting distinct physiological and pharmacological properties.

Its subcellular location is the cell membrane. It carries out the reaction chloride(in) = chloride(out). Delta subunit of the heteropentameric ligand-gated chloride channel gated by gamma-aminobutyric acid (GABA), a major inhibitory neurotransmitter in the brain. GABA-gated chloride channels, also named GABA(A) receptors (GABAAR), consist of five subunits arranged around a central pore and contain GABA active binding site(s) located at the alpha and beta subunit interface(s). When activated by GABA, GABAARs selectively allow the flow of chloride anions across the cell membrane down their electrochemical gradient. GABAARs containing delta/GABRD subunits are predominantly located in extrasynaptic or perisynaptic positions on hippocampus and cerebellar granule cells, and contribute to the tonic GABAergic inhibition. GABAAR containing alpha-4-beta-3-delta subunits can simultaneously bind GABA and histamine where histamine binds at the interface of two neighboring beta subunits, which may be involved in the regulation of sleep and wakefulness. The chain is Gamma-aminobutyric acid receptor subunit delta from Homo sapiens (Human).